We begin with the raw amino-acid sequence, 56 residues long: Large ribosomal subunit protein bL32 (56 aa).

The interval 1–26 is disordered; that stretch reads MAVQQNKPTRSKRGMRRSHDSLTTAA.

The protein belongs to the bacterial ribosomal protein bL32 family.

This is Large ribosomal subunit protein bL32 from Erwinia tasmaniensis (strain DSM 17950 / CFBP 7177 / CIP 109463 / NCPPB 4357 / Et1/99).